The following is a 134-amino-acid chain: MIMPQSRLDVADNSGAREIMCIRVLNSGIGGKGLTTGGGGNKRYAHVGDIIVASVKDAAPRGAVKAGDVVKAVVVRTSHAIKRADGSTIRFDKNAAVIINNQGEPRGTRVFGPVARELRDRRFMKIVSLAPEVL.

Belongs to the universal ribosomal protein uL14 family. As to quaternary structure, part of the 50S ribosomal subunit. Forms a cluster with proteins L3 and L19. In the 70S ribosome, L14 and L19 interact and together make contacts with the 16S rRNA in bridges B5 and B8.

Functionally, binds to 23S rRNA. Forms part of two intersubunit bridges in the 70S ribosome. The polypeptide is Large ribosomal subunit protein uL14 (Deinococcus deserti (strain DSM 17065 / CIP 109153 / LMG 22923 / VCD115)).